The chain runs to 342 residues: RNA 3'-terminal phosphate cyclase (342 aa).

The protein belongs to the RNA 3'-terminal cyclase family. Type 1 subfamily.

The protein localises to the cytoplasm. It carries out the reaction a 3'-end 3'-phospho-ribonucleotide-RNA + GTP = a 3'-end 2',3'-cyclophospho-ribonucleotide-RNA + GMP + diphosphate. With respect to regulation, inhibited by GMP. Its function is as follows. Catalyzes the GTP-dependent conversion of 3'-phosphate to a 2',3'-cyclic phosphodiester at the end of RNA. The biological role of this enzyme is unknown but it is likely to function in some aspects of cellular RNA processing. This is RNA 3'-terminal phosphate cyclase from Pyrococcus furiosus (strain ATCC 43587 / DSM 3638 / JCM 8422 / Vc1).